Consider the following 83-residue polypeptide: Small ribosomal subunit protein eS21 (83 aa).

This sequence belongs to the eukaryotic ribosomal protein eS21 family. Component of the 40S small ribosomal subunit. Interacts with sta.

The protein localises to the cytoplasm. Its subcellular location is the cytosol. It localises to the rough endoplasmic reticulum. Functionally, may be an associated component of the ribosome rather than a core structural subunit. May act as a translation initiation factor. Has a role in regulation of cell proliferation in the hematopoietic organs and the imaginal disks of larva. The sequence is that of Small ribosomal subunit protein eS21 (RpS21) from Drosophila grimshawi (Hawaiian fruit fly).